A 258-amino-acid polypeptide reads, in one-letter code: 5'-nucleotidase SurE (258 aa).

A divalent metal cation-binding residues include aspartate 9, aspartate 10, serine 42, and asparagine 96.

The protein belongs to the SurE nucleotidase family. Requires a divalent metal cation as cofactor.

It is found in the cytoplasm. The enzyme catalyses a ribonucleoside 5'-phosphate + H2O = a ribonucleoside + phosphate. Functionally, nucleotidase that shows phosphatase activity on nucleoside 5'-monophosphates. The protein is 5'-nucleotidase SurE of Campylobacter jejuni subsp. jejuni serotype O:23/36 (strain 81-176).